Consider the following 565-residue polypeptide: Urocanate hydratase (565 aa).

NAD(+) contacts are provided by residues 61–62 (GG), Gln-139, 185–187 (GMG), Glu-205, Arg-210, 251–252 (NA), 272–276 (QTSAH), 282–283 (YL), and Tyr-331. The active site involves Cys-419. The segment at 453-472 (LDSGSVASPNRETESMRDGS) is disordered. Basic and acidic residues predominate over residues 463–472 (RETESMRDGS). Gly-501 contributes to the NAD(+) binding site.

It belongs to the urocanase family. It depends on NAD(+) as a cofactor.

Its subcellular location is the cytoplasm. It catalyses the reaction 4-imidazolone-5-propanoate = trans-urocanate + H2O. Its pathway is amino-acid degradation; L-histidine degradation into L-glutamate; N-formimidoyl-L-glutamate from L-histidine: step 2/3. Functionally, catalyzes the conversion of urocanate to 4-imidazolone-5-propionate. This Pseudomonas savastanoi pv. phaseolicola (strain 1448A / Race 6) (Pseudomonas syringae pv. phaseolicola (strain 1448A / Race 6)) protein is Urocanate hydratase.